A 396-amino-acid chain; its full sequence is S-adenosylmethionine synthase (396 aa).

ATP is bound at residue H16. D18 is a Mg(2+) binding site. Residue E44 participates in K(+) binding. Residues E57 and Q100 each coordinate L-methionine. The flexible loop stretch occupies residues 100 to 110 (QSVDIAQGVDR). Residues 165 to 167 (DAK), D240, 246 to 247 (RK), A263, and K267 contribute to the ATP site. Residue D240 participates in L-methionine binding. Position 271 (K271) interacts with L-methionine.

It belongs to the AdoMet synthase family. Homotetramer; dimer of dimers. It depends on Mg(2+) as a cofactor. K(+) is required as a cofactor.

It localises to the cytoplasm. It catalyses the reaction L-methionine + ATP + H2O = S-adenosyl-L-methionine + phosphate + diphosphate. It functions in the pathway amino-acid biosynthesis; S-adenosyl-L-methionine biosynthesis; S-adenosyl-L-methionine from L-methionine: step 1/1. Catalyzes the formation of S-adenosylmethionine (AdoMet) from methionine and ATP. The overall synthetic reaction is composed of two sequential steps, AdoMet formation and the subsequent tripolyphosphate hydrolysis which occurs prior to release of AdoMet from the enzyme. This chain is S-adenosylmethionine synthase, found in Stutzerimonas stutzeri (strain A1501) (Pseudomonas stutzeri).